The following is a 374-amino-acid chain: Carnitine monooxygenase oxygenase subunit (374 aa).

Residues 47–155 (WICVAHSSEL…LEEYAGFVFI (109 aa)) enclose the Rieske domain. Residues cysteine 89, histidine 91, cysteine 109, and histidine 112 each contribute to the [2Fe-2S] cluster site. Positions 211, 216, and 325 each coordinate Fe cation.

This sequence belongs to the bacterial ring-hydroxylating dioxygenase alpha subunit family. CntA subfamily. As to quaternary structure, composed of an oxygenase subunit and a reductase subunit. [2Fe-2S] cluster is required as a cofactor. The cofactor is Fe cation.

It catalyses the reaction (R)-carnitine + NADH + O2 + H(+) = (3R)-3-hydroxy-4-oxobutanoate + trimethylamine + NAD(+) + H2O. The catalysed reaction is (R)-carnitine + NADPH + O2 + H(+) = (3R)-3-hydroxy-4-oxobutanoate + trimethylamine + NADP(+) + H2O. The protein operates within amine and polyamine metabolism; carnitine metabolism. Converts carnitine to trimethylamine and malic semialdehyde. The chain is Carnitine monooxygenase oxygenase subunit (yeaW) from Escherichia coli O157:H7.